The following is a 295-amino-acid chain: 4-hydroxy-tetrahydrodipicolinate synthase 1 (295 aa).

Thr46 lines the pyruvate pocket. The Proton donor/acceptor role is filled by Tyr134. Lys162 (schiff-base intermediate with substrate) is an active-site residue. Residue Val204 participates in pyruvate binding.

The protein belongs to the DapA family. Homotetramer; dimer of dimers.

It localises to the cytoplasm. It carries out the reaction L-aspartate 4-semialdehyde + pyruvate = (2S,4S)-4-hydroxy-2,3,4,5-tetrahydrodipicolinate + H2O + H(+). The protein operates within amino-acid biosynthesis; L-lysine biosynthesis via DAP pathway; (S)-tetrahydrodipicolinate from L-aspartate: step 3/4. Its function is as follows. Catalyzes the condensation of (S)-aspartate-beta-semialdehyde [(S)-ASA] and pyruvate to 4-hydroxy-tetrahydrodipicolinate (HTPA). This chain is 4-hydroxy-tetrahydrodipicolinate synthase 1, found in Halalkalibacterium halodurans (strain ATCC BAA-125 / DSM 18197 / FERM 7344 / JCM 9153 / C-125) (Bacillus halodurans).